The chain runs to 89 residues: MALTQTRKQEIINQYQAHGTDTGSADLQVALLTERINQLTTHLQANPKDHASRRGLLQLIGRRRGLLSYIQKKDFQRYQDLIGRLGIRR.

The protein belongs to the universal ribosomal protein uS15 family. In terms of assembly, part of the 30S ribosomal subunit. Forms a bridge to the 50S subunit in the 70S ribosome, contacting the 23S rRNA.

In terms of biological role, one of the primary rRNA binding proteins, it binds directly to 16S rRNA where it helps nucleate assembly of the platform of the 30S subunit by binding and bridging several RNA helices of the 16S rRNA. Forms an intersubunit bridge (bridge B4) with the 23S rRNA of the 50S subunit in the ribosome. This is Small ribosomal subunit protein uS15 from Gloeothece citriformis (strain PCC 7424) (Cyanothece sp. (strain PCC 7424)).